Consider the following 65-residue polypeptide: DNA gyrase inhibitor YacG (65 aa).

Zn(2+)-binding residues include Cys9, Cys12, Cys28, and Cys32. A disordered region spans residues 45 to 65 (KRIPSSGDLSESDDWSEEPKQ). The segment covering 54–65 (SESDDWSEEPKQ) has biased composition (acidic residues).

This sequence belongs to the DNA gyrase inhibitor YacG family. In terms of assembly, interacts with GyrB. Zn(2+) serves as cofactor.

In terms of biological role, inhibits all the catalytic activities of DNA gyrase by preventing its interaction with DNA. Acts by binding directly to the C-terminal domain of GyrB, which probably disrupts DNA binding by the gyrase. The protein is DNA gyrase inhibitor YacG of Shigella boydii serotype 18 (strain CDC 3083-94 / BS512).